The primary structure comprises 403 residues: N-isopropylammelide isopropyl amidohydrolase (403 aa).

The Zn(2+) site is built by H60, H62, and H217. Catalysis depends on H249, which acts as the Proton donor/acceptor. D303 provides a ligand contact to Zn(2+).

Belongs to the metallo-dependent hydrolases superfamily. N-acyl-D-amino-acid deacylase family. Homotetramer. The cofactor is Zn(2+).

The protein localises to the cytoplasm. It catalyses the reaction N-isopropylammelide + H2O + H(+) = isopropylamine + cyanurate. It participates in xenobiotic degradation; atrazine degradation; cyanurate from atrazine: step 3/3. Inhibited by N-ethylammeline, N-hydroxyethylammeline, N-isopropylammeline, ammeline and 2-amino-4hydroxy-1,3,5-s-triazine. Functionally, transforms N-isopropylammelide to cyanuric acid and isopropylamine. The polypeptide is N-isopropylammelide isopropyl amidohydrolase (atzC) (Pseudomonas sp. (strain ADP)).